A 183-amino-acid chain; its full sequence is Ribulose bisphosphate carboxylase small subunit, chloroplastic 7 (183 aa).

A chloroplast-targeting transit peptide spans 1 to 43; sequence MAAAMMNKTVVVGKESVKGGVAPKVAMSRGGFLNSGIMKKDRD.

It belongs to the RuBisCO small chain family. Heterohexadecamer of 8 large and 8 small subunits.

The protein resides in the plastid. It localises to the chloroplast. Its function is as follows. RuBisCO catalyzes two reactions: the carboxylation of D-ribulose 1,5-bisphosphate, the primary event in carbon dioxide fixation, as well as the oxidative fragmentation of the pentose substrate. Both reactions occur simultaneously and in competition at the same active site. Although the small subunit is not catalytic it is essential for maximal activity. The chain is Ribulose bisphosphate carboxylase small subunit, chloroplastic 7 from Acetabularia peniculus (Green alga).